We begin with the raw amino-acid sequence, 196 residues long: MPIGVPKVPFRSPGEEDASWVDIYNRLYRERLLFLGQEVNSEISNQLIGLMVYLSIEDDKKDLYLFINSPGGWVIPGIAIYDTMQFVQPDVQTVCMGLAASMGSFVLAGGKITKRLAFPHARVMIHQPASSFYEAQTGEFILEAEELLKLRETITRVYVQRTGKPLWLVSEDMERDVFMSAAEAQAYGIVDLVAVE.

The Nucleophile role is filled by serine 101. Residue histidine 126 is part of the active site.

This sequence belongs to the peptidase S14 family. As to quaternary structure, component of the chloroplastic Clp protease core complex.

Its subcellular location is the plastid. It is found in the chloroplast stroma. The enzyme catalyses Hydrolysis of proteins to small peptides in the presence of ATP and magnesium. alpha-casein is the usual test substrate. In the absence of ATP, only oligopeptides shorter than five residues are hydrolyzed (such as succinyl-Leu-Tyr-|-NHMec, and Leu-Tyr-Leu-|-Tyr-Trp, in which cleavage of the -Tyr-|-Leu- and -Tyr-|-Trp bonds also occurs).. Cleaves peptides in various proteins in a process that requires ATP hydrolysis. Has a chymotrypsin-like activity. Plays a major role in the degradation of misfolded proteins. The chain is ATP-dependent Clp protease proteolytic subunit from Lotus japonicus (Lotus corniculatus var. japonicus).